Reading from the N-terminus, the 231-residue chain is Large ribosomal subunit protein uL1 (231 aa).

It belongs to the universal ribosomal protein uL1 family. As to quaternary structure, part of the 50S ribosomal subunit.

Binds directly to 23S rRNA. The L1 stalk is quite mobile in the ribosome, and is involved in E site tRNA release. In terms of biological role, protein L1 is also a translational repressor protein, it controls the translation of the L11 operon by binding to its mRNA. In Pseudomonas fluorescens (strain ATCC BAA-477 / NRRL B-23932 / Pf-5), this protein is Large ribosomal subunit protein uL1.